The primary structure comprises 116 residues: Protein Rev (116 aa).

Phosphoserine; by host CK2 occurs at positions 5 and 8. Residues 18–26 (LIKFLYQSN) form a homomultimerization region. The interval 23–48 (YQSNPPPNPEGTRQARRNRRRRWRER) is disordered. A Nuclear localization signal and RNA-binding (RRE) motif is present at residues 34–50 (TRQARRNRRRRWRERQR). Over residues 36-48 (QARRNRRRRWRER) the composition is skewed to basic residues. Positions 73–84 (LQLPPLERLNLD) match the Nuclear export signal and binding to XPO1 motif. The interval 90 to 116 (GTSGTQGVGSPEILVESPAVLEPGTKE) is disordered. Phosphoserine; by host is present on residues serine 92 and serine 99.

This sequence belongs to the HIV-1 REV protein family. As to quaternary structure, homomultimer; when bound to the RRE. Multimeric assembly is essential for activity and may involve XPO1. Binds to human KPNB1, XPO1, TNPO1, RANBP5 and IPO7. Interacts with the viral Integrase. Interacts with human KHDRBS1. Interacts with human NAP1; this interaction decreases Rev multimerization and stimulates its activity. Interacts with human DEAD-box helicases DDX3 and DDX24; these interactions may serve for viral RNA export to the cytoplasm and packaging, respectively. Interacts with human PSIP1; this interaction may inhibit HIV-1 DNA integration by promoting dissociation of the Integrase-LEDGF/p75 complex. Asymmetrically arginine dimethylated at one site by host PRMT6. Methylation impairs the RNA-binding activity and export of viral RNA from the nucleus to the cytoplasm. Post-translationally, phosphorylated by protein kinase CK2. Presence of, and maybe binding to the N-terminus of the regulatory beta subunit of CK2 is necessary for CK2-mediated Rev's phosphorylation.

The protein resides in the host nucleus. It localises to the host nucleolus. It is found in the host cytoplasm. In terms of biological role, escorts unspliced or incompletely spliced viral pre-mRNAs (late transcripts) out of the nucleus of infected cells. These pre-mRNAs carry a recognition sequence called Rev responsive element (RRE) located in the env gene, that is not present in fully spliced viral mRNAs (early transcripts). This function is essential since most viral proteins are translated from unspliced or partially spliced pre-mRNAs which cannot exit the nucleus by the pathway used by fully processed cellular mRNAs. Rev itself is translated from a fully spliced mRNA that readily exits the nucleus. Rev's nuclear localization signal (NLS) binds directly to KPNB1/Importin beta-1 without previous binding to KPNA1/Importin alpha-1. KPNB1 binds to the GDP bound form of RAN (Ran-GDP) and targets Rev to the nucleus. In the nucleus, the conversion from Ran-GDP to Ran-GTP dissociates Rev from KPNB1 and allows Rev's binding to the RRE in viral pre-mRNAs. Rev multimerization on the RRE via cooperative assembly exposes its nuclear export signal (NES) to the surface. Rev can then form a complex with XPO1/CRM1 and Ran-GTP, leading to nuclear export of the complex. Conversion from Ran-GTP to Ran-GDP mediates dissociation of the Rev/RRE/XPO1/RAN complex, so that Rev can return to the nucleus for a subsequent round of export. Beside KPNB1, also seems to interact with TNPO1/Transportin-1, RANBP5/IPO5 and IPO7/RANBP7 for nuclear import. The nucleoporin-like HRB/RIP is an essential cofactor that probably indirectly interacts with Rev to release HIV RNAs from the perinuclear region to the cytoplasm. This is Protein Rev from Human immunodeficiency virus type 1 group M subtype B (isolate OYI) (HIV-1).